The primary structure comprises 112 residues: Small ribosomal subunit protein bS16 (112 aa).

It belongs to the bacterial ribosomal protein bS16 family.

This Karelsulcia muelleri (strain GWSS) (Sulcia muelleri) protein is Small ribosomal subunit protein bS16.